We begin with the raw amino-acid sequence, 740 residues long: Catalase-peroxidase (740 aa).

A cross-link (tryptophyl-tyrosyl-methioninium (Trp-Tyr) (with M-255)) is located at residues 107–229; that stretch reads WHAAGTYRIH…LAAVQMGLIY (123 aa). The active-site Proton acceptor is H108. A cross-link (tryptophyl-tyrosyl-methioninium (Tyr-Met) (with W-107)) is located at residues 229–255; it reads YVNPEGPNGNPDPMAAAVDIRETFRRM. H270 is a binding site for heme b.

It belongs to the peroxidase family. Peroxidase/catalase subfamily. Homodimer. The cofactor is heme b. Post-translationally, formation of the three residue Trp-Tyr-Met cross-link is important for the catalase, but not the peroxidase activity of the enzyme.

The catalysed reaction is H2O2 + AH2 = A + 2 H2O. The enzyme catalyses 2 H2O2 = O2 + 2 H2O. Bifunctional enzyme with both catalase and broad-spectrum peroxidase activity. May play a role in the intracellular survival of mycobacteria. The chain is Catalase-peroxidase from Mycobacterium bovis (strain ATCC BAA-935 / AF2122/97).